The primary structure comprises 73 residues: Protein SlyX homolog (73 aa).

Residues 54–73 (LQQAESNAPAAPANERPPHY) form a disordered region. Low complexity predominate over residues 57–67 (AESNAPAAPAN).

Belongs to the SlyX family.

This is Protein SlyX homolog from Rhodopseudomonas palustris (strain BisA53).